Here is a 264-residue protein sequence, read N- to C-terminus: Thymidylate synthase (264 aa).

Residue Arg21 participates in dUMP binding. Position 51 (His51) interacts with (6R)-5,10-methylene-5,6,7,8-tetrahydrofolate. Residue Arg126–Arg127 participates in dUMP binding. Cys146 serves as the catalytic Nucleophile. Residues Arg166–Asp169, Asn177, and His207–Tyr209 each bind dUMP. Asp169 is a (6R)-5,10-methylene-5,6,7,8-tetrahydrofolate binding site. Ser263 provides a ligand contact to (6R)-5,10-methylene-5,6,7,8-tetrahydrofolate.

Belongs to the thymidylate synthase family. Bacterial-type ThyA subfamily. As to quaternary structure, homodimer.

The protein localises to the cytoplasm. The catalysed reaction is dUMP + (6R)-5,10-methylene-5,6,7,8-tetrahydrofolate = 7,8-dihydrofolate + dTMP. It functions in the pathway pyrimidine metabolism; dTTP biosynthesis. Its function is as follows. Catalyzes the reductive methylation of 2'-deoxyuridine-5'-monophosphate (dUMP) to 2'-deoxythymidine-5'-monophosphate (dTMP) while utilizing 5,10-methylenetetrahydrofolate (mTHF) as the methyl donor and reductant in the reaction, yielding dihydrofolate (DHF) as a by-product. This enzymatic reaction provides an intracellular de novo source of dTMP, an essential precursor for DNA biosynthesis. The protein is Thymidylate synthase of Laribacter hongkongensis (strain HLHK9).